The sequence spans 352 residues: Ion-translocating oxidoreductase complex subunit D (352 aa).

Helical transmembrane passes span I20 to G40, L44 to L64, A78 to A109, and P123 to L143. The residue at position 187 (T187) is an FMN phosphoryl threonine. The next 5 helical transmembrane spans lie at V214–L234, W242–F262, L267–L287, L301–P321, and D322–T342.

Belongs to the NqrB/RnfD family. As to quaternary structure, the complex is composed of six subunits: RsxA, RsxB, RsxC, RsxD, RsxE and RsxG. FMN serves as cofactor.

The protein resides in the cell inner membrane. Its function is as follows. Part of a membrane-bound complex that couples electron transfer with translocation of ions across the membrane. Required to maintain the reduced state of SoxR. The protein is Ion-translocating oxidoreductase complex subunit D of Salmonella arizonae (strain ATCC BAA-731 / CDC346-86 / RSK2980).